A 152-amino-acid polypeptide reads, in one-letter code: Protein-export protein SecB (152 aa).

It belongs to the SecB family. As to quaternary structure, homotetramer, a dimer of dimers. One homotetramer interacts with 1 SecA dimer.

Its subcellular location is the cytoplasm. One of the proteins required for the normal export of preproteins out of the cell cytoplasm. It is a molecular chaperone that binds to a subset of precursor proteins, maintaining them in a translocation-competent state. It also specifically binds to its receptor SecA. The chain is Protein-export protein SecB from Acinetobacter baumannii (strain AB307-0294).